The chain runs to 235 residues: MPPIPSEPENISLIHPKVLLLSAGVTTSLFLSYKFYKRYVRRIRNYLDLTPEILDRQTPLYGRVTRVGDGDNFRFYHTPGGILFGWGWLRHVPTKRQELKDETLMVRLCGVDAPERAHWGKPAQPYSEEALAWLKNYIFGRNVVVTPYSIDQYKRLVGRAQVWKWTGKKDISAEMLRNGLGVVYEGKIGAEFGDNESWYRKLEARAKWLRRGLWSLGSSMTTPGEFKKVHYRGDS.

Residues 11 to 33 traverse the membrane as a helical segment; the sequence is ISLIHPKVLLLSAGVTTSLFLSY. In terms of domain architecture, TNase-like spans 58–216; sequence TPLYGRVTRV…KWLRRGLWSL (159 aa). Arg107 is an active-site residue. Asp112 contributes to the Ca(2+) binding site. Residues Glu115 and Arg155 contribute to the active site.

Belongs to the LCL3 family.

The protein localises to the mitochondrion. It localises to the membrane. The polypeptide is Probable endonuclease LCL3 (LCL3) (Debaryomyces hansenii (strain ATCC 36239 / CBS 767 / BCRC 21394 / JCM 1990 / NBRC 0083 / IGC 2968) (Yeast)).